Consider the following 448-residue polypeptide: Ribulose bisphosphate carboxylase large chain (448 aa).

Lys-4 carries the N6,N6,N6-trimethyllysine modification. Positions 113 and 163 each coordinate substrate. The active-site Proton acceptor is Lys-165. Residue Lys-167 participates in substrate binding. Residues Lys-191, Asp-193, and Glu-194 each contribute to the Mg(2+) site. Lys-191 carries the post-translational modification N6-carboxylysine. The active-site Proton acceptor is the His-284. The substrate site is built by Arg-285, His-317, and Ser-369.

It belongs to the RuBisCO large chain family. Type I subfamily. As to quaternary structure, heterohexadecamer of 8 large chains and 8 small chains; disulfide-linked. The disulfide link is formed within the large subunit homodimers. Mg(2+) serves as cofactor. Post-translationally, the disulfide bond which can form in the large chain dimeric partners within the hexadecamer appears to be associated with oxidative stress and protein turnover.

It is found in the plastid. The protein localises to the chloroplast. The enzyme catalyses 2 (2R)-3-phosphoglycerate + 2 H(+) = D-ribulose 1,5-bisphosphate + CO2 + H2O. The catalysed reaction is D-ribulose 1,5-bisphosphate + O2 = 2-phosphoglycolate + (2R)-3-phosphoglycerate + 2 H(+). RuBisCO catalyzes two reactions: the carboxylation of D-ribulose 1,5-bisphosphate, the primary event in carbon dioxide fixation, as well as the oxidative fragmentation of the pentose substrate in the photorespiration process. Both reactions occur simultaneously and in competition at the same active site. This Eucryphia lucida (Leatherwood) protein is Ribulose bisphosphate carboxylase large chain.